Consider the following 248-residue polypeptide: Probable transcriptional regulatory protein HCH_04926 (248 aa).

This sequence belongs to the TACO1 family.

It localises to the cytoplasm. In Hahella chejuensis (strain KCTC 2396), this protein is Probable transcriptional regulatory protein HCH_04926.